A 776-amino-acid polypeptide reads, in one-letter code: Microtubule-associated protein tau (776 aa).

The span at 1–26 (MAEPRQEFDVMEDHAGTYGLGDRKDQ) shows a compositional bias: basic and acidic residues. Residues 1–591 (MAEPRQEFDV…PVPMPDLKNV (591 aa)) are disordered. N-acetylalanine is present on Ala2. Phosphotyrosine occurs at positions 18 and 29. A Glycyl lysine isopeptide (Lys-Gly) (interchain with G-Cter in ubiquitin) cross-link involves residue Lys44. Ser46 and Ser61 each carry phosphoserine. A compositionally biased stretch (polar residues) spans 61-71 (SETSDAKSTPT). A phosphothreonine mark is found at Thr69, Thr71, and Thr111. Composition is skewed to basic and acidic residues over residues 179-189 (EGGRHAPELLK) and 207-216 (GGKERPGIKE). A compositionally biased stretch (acidic residues) spans 217-228 (EVDEDRDVDESS). Residues 314-323 (EQAHSEEHLG) are compositionally biased toward basic and acidic residues. The span at 325-340 (AAFPGAPGEGPEAQGP) shows a compositional bias: low complexity. 2 stretches are compositionally biased toward basic and acidic residues: residues 344–356 (EDTK…EPSE) and 381–393 (KSKD…DKKA). Low complexity predominate over residues 442–453 (VSSVTXRTGSSG). A compositionally biased stretch (basic and acidic residues) spans 455 to 466 (KEMKLKGADGKT). A Phosphothreonine modification is found at Thr470. Arg472 carries the omega-N-methylarginine modification. Position 480 is an N6,N6-dimethyllysine; alternate (Lys480). Position 480 is an N6-acetyllysine; alternate (Lys480). Phosphothreonine is present on residues Thr486, Thr492, and Thr498. 3 positions are modified to phosphoserine: Ser502, Ser526, and Ser530. The segment covering 517–528 (KSERGEPPKSGD) has biased composition (basic and acidic residues). A compositionally biased stretch (low complexity) spans 529–549 (RSGYSSPGSPGTPGSRSRTPS). The residue at position 532 (Tyr532) is a Phosphotyrosine. Phosphoserine is present on residues Ser533, Ser534, and Ser537. 2 positions are modified to phosphothreonine: Thr540 and Thr547. Residue Ser549 is modified to Phosphoserine. Thr552 carries the post-translational modification Phosphothreonine. Lys560 bears the N6-acetyllysine mark. Phosphothreonine is present on Thr566. Ser570 and Ser572 each carry phosphoserine. Tau/MAP repeat units lie at residues 579–609 (QTAP…GGGK), 610–640 (VQII…GGGS), 641–671 (VQIV…GGGQ), and 672–703 (VEVK…GGGN). Residue Lys589 forms a Glycyl lysine isopeptide (Lys-Gly) (interchain with G-Cter in ubiquitin) linkage. Position 594 is an N6-acetyllysine; alternate (Lys594). An N6-methyllysine; alternate modification is found at Lys594. A Glycyl lysine isopeptide (Lys-Gly) (interchain with G-Cter in ubiquitin); alternate cross-link involves residue Lys594. At Ser597 the chain carries Phosphoserine. Residue Lys602 forms a Glycyl lysine isopeptide (Lys-Gly) (interchain with G-Cter in ubiquitin) linkage. At Lys616 the chain carries N6-acetyllysine; alternate. Residue Lys616 forms a Glycyl lysine isopeptide (Lys-Gly) (interchain with G-Cter in ubiquitin); alternate linkage. Ser620 and Ser624 each carry phosphoserine. At Lys625 the chain carries N6-acetyllysine. At Ser628 the chain carries Phosphoserine. Lys633 carries the post-translational modification N6-acetyllysine; alternate. Residue Lys633 forms a Glycyl lysine isopeptide (Lys-Gly) (interchain with G-Cter in ubiquitin); alternate linkage. Phosphoserine is present on Ser640. Lys646 carries the post-translational modification N6,N6-dimethyllysine; alternate. Lys646, Lys652, and Lys656 each carry N6-acetyllysine; alternate. Residues Lys646, Lys652, and Lys656 each participate in a glycyl lysine isopeptide (Lys-Gly) (interchain with G-Cter in ubiquitin); alternate cross-link. Ser659 carries the phosphoserine modification. Lys666, Lys678, and Lys682 each carry N6-acetyllysine; alternate. Glycyl lysine isopeptide (Lys-Gly) (interchain with G-Cter in ubiquitin); alternate cross-links involve residues Lys666, Lys678, and Lys682. Residue Arg684 is modified to Omega-N-methylarginine. Residue Ser687 is modified to Phosphoserine. Residue Lys688 forms a Glycyl lysine isopeptide (Lys-Gly) (interchain with G-Cter in ubiquitin) linkage. Position 691 is a phosphoserine (Ser691). Lys704 is subject to N6-acetyllysine; alternate. Lys704 is covalently cross-linked (Glycyl lysine isopeptide (Lys-Gly) (interchain with G-Cter in ubiquitin); alternate). Residue Lys710 forms a Glycyl lysine isopeptide (Lys-Gly) (interchain with G-Cter in ubiquitin) linkage. The residue at position 720 (Lys720) is an N6-acetyllysine; alternate. A Glycyl lysine isopeptide (Lys-Gly) (interchain with G-Cter in ubiquitin); alternate cross-link involves residue Lys720. Tyr729 bears the Phosphotyrosine mark. 2 positions are modified to phosphoserine: Ser731 and Ser735. The segment at 733 to 752 (VVSGDTSPRHLSNVSSTGSI) is disordered. Over residues 736-751 (GDTSPRHLSNVSSTGS) the composition is skewed to polar residues. The residue at position 738 (Thr738) is a Phosphothreonine. Phosphoserine occurs at positions 739, 744, 751, and 757. Residue Thr762 is modified to Phosphothreonine.

Interacts with MARK1, MARK2, MARK3 and MARK4. Interacts with SQSTM1 when polyubiquitinated. Interacts with PSMC2 through SQSTM1. Interacts with FKBP4. Binds to CSNK1D. Interacts with SGK1. Interacts with EPM2A; the interaction dephosphorylates MAPT at Ser-396. Interacts with PIN1. Interacts with LRRK2. Interacts with LRP1, leading to endocytosis; this interaction is reduced in the presence of LRPAP1/RAP. In terms of processing, polyubiquitinated. Requires functional TRAF6 and may provoke SQSTM1-dependent degradation by the proteasome. Post-translationally, phosphorylation at various serine and threonine residues in S-P or T-P motifs by proline-directed protein kinases (PDPK1, CDK1, CDK5, GSK3, MAPK) (a few sites per protein in interphase, more in mitosis), and at serine residues in K-X-G-S motifs by MAP/microtubule affinity-regulating kinase (MARK1, MARK2, MARK3 or MARK4), causing detachment from microtubules, and their disassembly. Phosphorylation at Ser-597 by BRSK1 and BRSK2 in neurons affects ability to bind microtubules and plays a role in neuron polarization. Phosphorylated by PHK. Dephosphorylation at several serine and threonine residues by the serine/threonine phosphatase PPP5C.

It localises to the cytoplasm. It is found in the cytosol. The protein resides in the cell membrane. The protein localises to the cytoskeleton. Its subcellular location is the cell projection. It localises to the axon. It is found in the dendrite. Functionally, promotes microtubule assembly and stability, and might be involved in the establishment and maintenance of neuronal polarity. The C-terminus binds axonal microtubules while the N-terminus binds neural plasma membrane components, suggesting that tau functions as a linker protein between both. Axonal polarity is predetermined by tau localization (in the neuronal cell) in the domain of the cell body defined by the centrosome. The short isoforms allow plasticity of the cytoskeleton whereas the longer isoforms may preferentially play a role in its stabilization. The sequence is that of Microtubule-associated protein tau (MAPT) from Hylobates lar (Lar gibbon).